The following is a 38-amino-acid chain: Large ribosomal subunit protein bL36 (38 aa).

It belongs to the bacterial ribosomal protein bL36 family.

The protein is Large ribosomal subunit protein bL36 of Thermotoga maritima (strain ATCC 43589 / DSM 3109 / JCM 10099 / NBRC 100826 / MSB8).